We begin with the raw amino-acid sequence, 639 residues long: Chaperone protein HtpG (639 aa).

The interval 1-343 (MEATATKEHL…SNDLPLNVSR (343 aa)) is a; substrate-binding. Residues 344 to 564 (EILQESKDIE…THDMSGNLER (221 aa)) form a b region. The interval 565 to 639 (LLKSAGQKVT…QLFLSTGSKE (75 aa)) is c.

Belongs to the heat shock protein 90 family. In terms of assembly, homodimer.

Its subcellular location is the cytoplasm. Molecular chaperone. Has ATPase activity. This chain is Chaperone protein HtpG, found in Nitrosospira multiformis (strain ATCC 25196 / NCIMB 11849 / C 71).